Reading from the N-terminus, the 327-residue chain is Probable cell division protein WhiA (327 aa).

The segment at residues 275–308 is a DNA-binding region (H-T-H motif); the sequence is SLEELGRLADPPMTKDAVAGRIRRLLSMADRKAK. Residues 304–327 are disordered; that stretch reads DRKAKQDGIPDTESAVTPDLLEDA.

It belongs to the WhiA family.

Its function is as follows. Involved in cell division and chromosome segregation. This is Probable cell division protein WhiA from Mycobacterium sp. (strain MCS).